A 541-amino-acid chain; its full sequence is Chaperonin GroEL 2 (541 aa).

ATP-binding positions include 29 to 32 (TLGP), 86 to 90 (DGTTT), glycine 413, 476 to 478 (NAA), and aspartate 492.

The protein belongs to the chaperonin (HSP60) family. As to quaternary structure, forms a cylinder of 14 subunits composed of two heptameric rings stacked back-to-back. Interacts with the co-chaperonin GroES.

The protein resides in the cytoplasm. The enzyme catalyses ATP + H2O + a folded polypeptide = ADP + phosphate + an unfolded polypeptide.. Its function is as follows. Together with its co-chaperonin GroES, plays an essential role in assisting protein folding. The GroEL-GroES system forms a nano-cage that allows encapsulation of the non-native substrate proteins and provides a physical environment optimized to promote and accelerate protein folding. This Streptomyces avermitilis (strain ATCC 31267 / DSM 46492 / JCM 5070 / NBRC 14893 / NCIMB 12804 / NRRL 8165 / MA-4680) protein is Chaperonin GroEL 2.